Here is a 687-residue protein sequence, read N- to C-terminus: Transketolase 2 (687 aa).

His47 contacts substrate. Thiamine diphosphate-binding positions include His87 and Gly135–Leu137. Mg(2+) is bound at residue Asp176. Thiamine diphosphate is bound by residues Gly177 and Asn206. Positions 206 and 208 each coordinate Mg(2+). The substrate site is built by His282, Arg379, and Ser406. A thiamine diphosphate-binding site is contributed by His282. Glu432 (proton donor) is an active-site residue. Phe458 contributes to the thiamine diphosphate binding site. Substrate is bound by residues His482, Asp490, His494, and Arg541.

This sequence belongs to the transketolase family. Mg(2+) is required as a cofactor. The cofactor is thiamine diphosphate.

It carries out the reaction D-sedoheptulose 7-phosphate + D-glyceraldehyde 3-phosphate = aldehydo-D-ribose 5-phosphate + D-xylulose 5-phosphate. Activity is increased sixfold following autotrophic growth on methanol compared with that of heterotrophically grown cells. In terms of biological role, catalyzes the transfer of a two-carbon ketol group from a ketose donor to an aldose acceptor, via a covalent intermediate with the cofactor thiamine pyrophosphate. This chain is Transketolase 2, found in Xanthobacter flavus.